A 147-amino-acid polypeptide reads, in one-letter code: Mid1-interacting protein 1-B (147 aa).

Belongs to the SPOT14 family.

The protein resides in the nucleus. The protein localises to the cytoplasm. It localises to the cytoskeleton. Involved in stabilization of microtubules. May play a role in the regulation of lipogenesis. The protein is Mid1-interacting protein 1-B of Danio rerio (Zebrafish).